Here is a 126-residue protein sequence, read N- to C-terminus: Large ribosomal subunit protein uL22 (126 aa).

The protein belongs to the universal ribosomal protein uL22 family. In terms of assembly, part of the 50S ribosomal subunit.

This protein binds specifically to 23S rRNA; its binding is stimulated by other ribosomal proteins, e.g. L4, L17, and L20. It is important during the early stages of 50S assembly. It makes multiple contacts with different domains of the 23S rRNA in the assembled 50S subunit and ribosome. Its function is as follows. The globular domain of the protein is located near the polypeptide exit tunnel on the outside of the subunit, while an extended beta-hairpin is found that lines the wall of the exit tunnel in the center of the 70S ribosome. The chain is Large ribosomal subunit protein uL22 from Sphingopyxis alaskensis (strain DSM 13593 / LMG 18877 / RB2256) (Sphingomonas alaskensis).